Here is a 474-residue protein sequence, read N- to C-terminus: Hydrogenobyrinate a,c-diamide synthase (474 aa).

The GATase cobBQ-type domain occupies 269-459; that stretch reads VVAVAGGQAF…LHTHWAGCPQ (191 aa). The active-site Nucleophile is the Cys-352.

This sequence belongs to the CobB/CbiA family. Requires Mg(2+) as cofactor.

The catalysed reaction is hydrogenobyrinate + 2 L-glutamine + 2 ATP + 2 H2O = hydrogenobyrinate a,c-diamide + 2 L-glutamate + 2 ADP + 2 phosphate + 2 H(+). It participates in cofactor biosynthesis; adenosylcobalamin biosynthesis; cob(II)yrinate a,c-diamide from precorrin-2 (aerobic route): step 9/10. In terms of biological role, catalyzes the ATP-dependent amidation of the two carboxylate groups at positions a and c of hydrogenobyrinate, using either L-glutamine or ammonia as the nitrogen source. In Thermobifida fusca (strain YX), this protein is Hydrogenobyrinate a,c-diamide synthase.